The following is a 1538-amino-acid chain: MEPRMESCLAQVLQKDVGKRLQVGQELIDYFSDKQKSADLEHDQTMLDKLVDGLATSWVNSSNYKVVLLGMDILSALVTRLQDRFKAQIGTVLPSLIDRLGDAKDSVREQDQTLLLKIMDQAANPQYVWDRMLGGFKHKNFRTREGICLCLIATLNASGAQTLTLSKIVPHICNLLGDPNSQVRDAAINSLVEIYRHVGERVRADLSKKGLPQSRLNVIFTKFDEVQKSGNMIQSANDKNFDDEDSVDGNRPSSASSTSSKAPPSSRRNVGMGTTRRLGSSTLGSKSSAAKEGAGAVDEEDFIKAFDDVPVVQIYSSRDLEESINKIREILSDDKHDWEQRVNALKKIRSLLLAGAAEYDNFFQHLRLLDGAFKLSAKDLRSQVVREACITLGHLSSVLGNKFDHGAEAIMPTIFNLIPNSAKIMATSGVVAVRLIIRHTHIPRLIPVITSNCTSKSVAVRRRCFEFLDLLLQEWQTHSLERHISVLAETIKKGIHDADSEARIEARKCYWGFHSHFSREAEHLYHTLESSYQKALQSHLKNSDSIVSLPQSDRSSSSSQESLNRPLSAKRSPTGSTTSRASTVSTKSVSTTGSLQRSRSDIDVNAAASAKSKVSSSSGTTPFSSAAALPPGSYASLGRIRTRRQSSGSATNVASTPDNRGRSRAKVVSQSQRSRSANPAGAGSRSSSPGKLLGSGYGGLTGGSSRGPPVTPSSEKRSKIPRSQGCSRETSPNRIGLARSSRIPRPSMSQGCSRDTSRESSRDTSPARGFPPLDRFGLGQPGRIPGSVNAMRVLSTSTDLEAAVADALKKPVRRRYEPYGMYSDDDANSDASSVCSERSYGSRNGGIPHYLRQTEDVAEVLNHCASSNWSERKEGLLGLQNLLKSQRTLSRVELKRLCEIFTRMFADPHSKRVFSMFLETLVDFIIIHKDDLQDWLFVLLTQLLKKMGADLLGSVQAKVQKALDVTRDSFPFDQQFNILMRFIVDQTQTPNLKVKVAILKYIESLARQMDPTDFVNSSETRLAVSRIITWTTEPKSSDVRKAAQIVLISLFELNTPEFTMLLGALPKTFQDGATKLLHNHLKNSSNTSVGSPSNTIGRTPSRHTSSRTSPLTSPTNCSHGGLSPSRLWGWSADGLAKHPPPFSQPNSIPTAPSHKALRRSYSPSMLDYDTENLNSEEIYSSLRGVTEAIEKFSFRSQEDLNEPIKRDGKKECDIVSRDGGAASPATEGRGGSEVEGGRTALDNKTSLLNTQPPRAFPGPRARDYNPYPYSDAINTYDKTALKEAVFDDDMEQLRDVPIDHSDLVADLLKELSNHNERVEERKGALLELLKITREDSLGVWEEHFKTILLLLLETLGDKDHSIRALALRVLREILRNQPARFKNYAELTIMKTLEAHKDSHKEVVRAAEEAASTLASSIHPEQCIKVLCPIIQTADYPINLAAIKMQTKVVERIAKESLLQLLVDIIPGLLQGYDNTESSVRKASVFCLVAIYSVIGEDLKPHLAQLTGSKMKLLNLYIKRAQTTNSNSSSSSDVSTHS.

HEAT repeat units follow at residues 87–124 (AQIG…QAAN) and 163–200 (LTLS…HVGE). The interval 235–292 (SANDKNFDDEDSVDGNRPSSASSTSSKAPPSSRRNVGMGTTRRLGSSTLGSKSSAAKE) is disordered. Serine 246 bears the Phosphoserine mark. Over residues 251–268 (RPSSASSTSSKAPPSSRR) the composition is skewed to low complexity. HEAT repeat units lie at residues 405–440 (HGAE…IRHT) and 441–477 (HIPR…EWQT). The segment at 543–783 (SDSIVSLPQS…DRFGLGQPGR (241 aa)) is disordered. Phosphoserine occurs at positions 545, 548, 558, 559, and 568. The span at 548 to 567 (SLPQSDRSSSSSQESLNRPL) shows a compositional bias: low complexity. The span at 574-594 (TGSTTSRASTVSTKSVSTTGS) shows a compositional bias: low complexity. Phosphoserine is present on serine 600. Positions 606-628 (AAASAKSKVSSSSGTTPFSSAAA) are enriched in low complexity. 4 positions are modified to phosphoserine: serine 636, serine 646, serine 647, and serine 649. Residues 645-658 (QSSGSATNVASTPD) show a composition bias toward polar residues. Residue threonine 656 is modified to Phosphothreonine. Positions 662–785 (RSRAKVVSQS…FGLGQPGRIP (124 aa)) are interaction with microtubules, MAPRE1 and MAPRE3. Positions 673–692 (RSRSANPAGAGSRSSSPGKL) are enriched in low complexity. Residues serine 684, serine 688, serine 695, and serine 705 each carry the phosphoserine modification. Residues 693–705 (LGSGYGGLTGGSS) are compositionally biased toward gly residues. Position 711 is a phosphothreonine (threonine 711). At serine 714 the chain carries Phosphoserine. Positions 724–733 (QGCSRETSPN) are enriched in polar residues. A phosphoserine mark is found at serine 787, serine 797, and serine 823. One copy of the HEAT 5 repeat lies at 974-1011 (QQFNILMRFIVDQTQTPNLKVKVAILKYIESLARQMDP). 2 disordered regions span residues 1080 to 1120 (HLKN…CSHG) and 1136 to 1156 (AKHP…SHKA). The segment covering 1082–1097 (KNSSNTSVGSPSNTIG) has biased composition (polar residues). Position 1091 is a phosphoserine (serine 1091). 2 positions are modified to phosphothreonine: threonine 1095 and threonine 1099. Low complexity predominate over residues 1106 to 1115 (SRTSPLTSPT). Serine 1113 bears the Phosphoserine mark. A phosphoserine mark is found at serine 1196 and serine 1223. Residues 1215-1238 (VSRDGGAASPATEGRGGSEVEGGR) form a disordered region. Residues 1254 to 1538 (RAFPGPRARD…SSSSDVSTHS (285 aa)) are interaction with CLIP2. Residues 1254 to 1538 (RAFPGPRARD…SSSSDVSTHS (285 aa)) are interaction with PHLDB2 and RSN. Residues 1256–1538 (FPGPRARDYN…SSSSDVSTHS (283 aa)) form a localization to kinetochores region. Positions 1299–1330 (DHSDLVADLLKELSNHNERVEERKGALLELLK) form a coiled coil. HEAT repeat units lie at residues 1342–1379 (EHFK…NQPA) and 1460–1497 (QLLV…VIGE).

Belongs to the CLASP family. Interacts with CLIP2, ERC1, MAPRE1, MAPRE3, microtubules, PHLDB2 and RSN. The interaction with ERC1 may be mediated by PHLDB2. Interacts with GCC2; recruits CLASP1 to Golgi membranes. Interacts with MACF1. Interacts with mtcl2 and MTCL1.

It is found in the cytoplasm. The protein resides in the cytoskeleton. Its subcellular location is the microtubule organizing center. The protein localises to the centrosome. It localises to the chromosome. It is found in the centromere. The protein resides in the kinetochore. Its subcellular location is the spindle. The protein localises to the golgi apparatus. It localises to the trans-Golgi network. In terms of biological role, microtubule plus-end tracking protein that promotes the stabilization of dynamic microtubules. Involved in the nucleation of noncentrosomal microtubules originating from the trans-Golgi network (TGN). Required for the polarization of the cytoplasmic microtubule arrays in migrating cells towards the leading edge of the cell. May act at the cell cortex to enhance the frequency of rescue of depolymerizing microtubules by attaching their plus-ends to cortical platforms composed of ERC1 and PHLDB2. This cortical microtubule stabilizing activity is regulated at least in part by phosphatidylinositol 3-kinase signaling. Also performs a similar stabilizing function at the kinetochore which is essential for the bipolar alignment of chromosomes on the mitotic spindle. This Homo sapiens (Human) protein is CLIP-associating protein 1 (CLASP1).